The primary structure comprises 535 residues: E3 ubiquitin-protein ligase rnf168 (535 aa).

An RING-type zinc finger spans residues 16–55 (CPICQEILLEPVTLPCKHTLCNPCFQMTVEKASLCCPFCR). Positions 112 to 130 (LCKPGEIRQEYEAEVSKIE) match the LR motif 1 motif. Positions 145 to 153 (EDYIQKLLA) match the UMI motif motif. Short sequence motifs (MIU motif) lie at residues 170–193 (IEEQ…LSNA) and 406–429 (RRKQ…KELK). Basic and acidic residues predominate over residues 429-443 (KQVNRGKGSPDEYQL). Residues 429 to 535 (KQVNRGKGSP…LDLFQRSAGK (107 aa)) are disordered. The LR motif 2 signature appears at 433-444 (RGKGSPDEYQLR). Composition is skewed to polar residues over residues 462 to 478 (NEQT…QSGY) and 492 to 507 (ITSS…TNTE).

The protein belongs to the RNF168 family. As to quaternary structure, monomer.

Its subcellular location is the nucleus. It catalyses the reaction S-ubiquitinyl-[E2 ubiquitin-conjugating enzyme]-L-cysteine + [acceptor protein]-L-lysine = [E2 ubiquitin-conjugating enzyme]-L-cysteine + N(6)-ubiquitinyl-[acceptor protein]-L-lysine.. The protein operates within protein modification; protein ubiquitination. In terms of biological role, E3 ubiquitin-protein ligase required for accumulation of repair proteins to sites of DNA damage. Acts with ube2n/ubc13 to amplify the rnf8-dependent histone ubiquitination. Recruited to sites of DNA damage at double-strand breaks (DSBs) by binding to ubiquitinated histone H2A and ubiquitinates histone H2A and H2AX, leading to amplify the rnf8-dependent H2A ubiquitination and promoting the formation of 'Lys-63'-linked ubiquitin conjugates. This leads to concentrate ubiquitinated histones H2A and H2AX at DNA lesions to the threshold required for recruitment of tp53bp1 and brca1. Catalyzes monoubiquitination of 'Lys-13' and 'Lys-15' of nucleosomal histone H2A (H2AK13Ub and H2AK15Ub, respectively). This chain is E3 ubiquitin-protein ligase rnf168, found in Xenopus tropicalis (Western clawed frog).